The primary structure comprises 284 residues: MDAIKKKMLMLKNDKENALDRAEQAEQAMKDAQEKNVKLEDEINDLNKKIRMVEDELDKAQESLKEATEQLEAATKKAADAEAEVASLNRRIQLVEEELDRAQERLNSTVEKLTDSEKAADESERARKVLENRQGADEDKMELLDMQLREAKMIAEEADRKYEEVARKLVITEGDLERAEERADLAETKARELEDELKTTTGQLKSMEAQATKASEKEEAYEEQVRDLSAKLKEAETRAEFAERTVAKLEKNVDDLEDALYAEKEKYRGVSEELDQALNELHNM.

Residues 1-284 (MDAIKKKMLM…DQALNELHNM (284 aa)) adopt a coiled-coil conformation. Disordered regions lie at residues 106 to 134 (LNST…ENRQ) and 186 to 221 (AETK…EEAY). Composition is skewed to basic and acidic residues over residues 112–134 (KLTD…ENRQ) and 186–198 (AETK…DELK).

The protein belongs to the tropomyosin family. Homodimer.

In terms of biological role, tropomyosin, in association with the troponin complex, plays a central role in the calcium dependent regulation of muscle contraction. The sequence is that of Tropomyosin (TPM) from Branchiostoma belcheri (Amphioxus).